The primary structure comprises 131 residues: Small ribosomal subunit protein uS8 (131 aa).

It belongs to the universal ribosomal protein uS8 family. In terms of assembly, part of the 30S ribosomal subunit. Contacts proteins S5 and S12.

In terms of biological role, one of the primary rRNA binding proteins, it binds directly to 16S rRNA central domain where it helps coordinate assembly of the platform of the 30S subunit. The chain is Small ribosomal subunit protein uS8 from Porphyromonas gingivalis (strain ATCC 33277 / DSM 20709 / CIP 103683 / JCM 12257 / NCTC 11834 / 2561).